A 128-amino-acid polypeptide reads, in one-letter code: AGGAHFFGQEGSRKVPEKGKEPATRSVLMAPTLHKAHQAAGRQTDDSAVVHFFKNMMSPKAPVQQKARSGASRAITKFIWGTDGQRPHYGASGSSKSREAYRGRKDGSGTLSSFFKMGKKGEGSPARR.

Disordered regions lie at residues 1-24 and 82-128; these read AGGAHFFGQEGSRKVPEKGKEPAT and TDGQ…PARR. 2 stretches are compositionally biased toward basic and acidic residues: residues 11-23 and 96-107; these read GSRKVPEKGKEPA and KSREAYRGRKDG.

Belongs to the myelin basic protein family. Post-translationally, the N-terminus is blocked.

It is found in the myelin membrane. Functionally, this protein may function to maintain proper structure of myelin. The polypeptide is Myelin basic protein (MBP) (Carcharhinus obscurus (Dusky shark)).